The sequence spans 140 residues: Thioredoxin H9 (140 aa).

Gly-2 carries N-myristoyl glycine lipidation. The S-palmitoyl cysteine moiety is linked to residue Cys-4. Ser-14 bears the Phosphoserine mark. Positions 25 to 129 constitute a Thioredoxin domain; sequence VHLITTKESW…PELQKKVTSI (105 aa). Active-site nucleophile residues include Cys-57 and Cys-60. A disulfide bond links Cys-57 and Cys-60. Ser-136 bears the Phosphoserine mark.

It belongs to the thioredoxin family. Plant H-type subfamily. Ubiquitous.

It is found in the cell membrane. In terms of biological role, probable thiol-disulfide oxidoreductase that may play a role in intercellular communication due to its ability to move from cell to cell. This is Thioredoxin H9 (TRX9) from Arabidopsis thaliana (Mouse-ear cress).